The sequence spans 520 residues: L-cysteine:1D-myo-inositol 2-amino-2-deoxy-alpha-D-glucopyranoside ligase (520 aa).

Cys-48 provides a ligand contact to Zn(2+). L-cysteinyl-5'-AMP-binding positions include 48 to 51 (CGIT), Thr-63, and 86 to 88 (NVT). The 'HIGH' region motif lies at 50 to 60 (ITPYDSTHLGH). The 'ERGGDP' region signature appears at 192–197 (ERGGDP). Residue Trp-232 coordinates L-cysteinyl-5'-AMP. Cys-236 contacts Zn(2+). L-cysteinyl-5'-AMP is bound at residue 254–256 (GED). Residue His-261 participates in Zn(2+) binding. Ile-288 is a binding site for L-cysteinyl-5'-AMP. The short motif at 294–298 (KMSKS) is the 'KMSKS' region element.

The protein belongs to the class-I aminoacyl-tRNA synthetase family. MshC subfamily. As to quaternary structure, monomer. Zn(2+) serves as cofactor.

The enzyme catalyses 1D-myo-inositol 2-amino-2-deoxy-alpha-D-glucopyranoside + L-cysteine + ATP = 1D-myo-inositol 2-(L-cysteinylamino)-2-deoxy-alpha-D-glucopyranoside + AMP + diphosphate + H(+). Catalyzes the ATP-dependent condensation of GlcN-Ins and L-cysteine to form L-Cys-GlcN-Ins. This chain is L-cysteine:1D-myo-inositol 2-amino-2-deoxy-alpha-D-glucopyranoside ligase, found in Corynebacterium kroppenstedtii (strain DSM 44385 / JCM 11950 / CIP 105744 / CCUG 35717).